Reading from the N-terminus, the 550-residue chain is MRAIETLRTALAAIIEEEGLAWPSKTVIEPPRDPRHGDLSVNSAMLLAREAKTNPRELAQKFAARLLERCPDVEKAEAAGPGFCNVTFSQAFWRQTVTDIESAGQAYGESREPGRRVLLEYVSANPTGPLHVGHGRGAAVGDSLARLLRKAGHHVHTEYYINDAGRQMRLLGLSVWLRVLELAGRPVEWPEDYYRGDYIIDIAREMLTANPALPDMPAPEGEDLCYEKAMTDILNGIKDDLRDFRVEHLRWFSEKTLVETGAVDAAFAALGKSGYTYEQDNAFWFATEQLGDDKNRVLKKSDGSLTYFASDIAYHHDKFERGYDWLIDVWGADHHGYIPRMRAAITAMGKERDSFDVVLIQLVNLLREGQPVSMSTRAGTFETLADVIKEVGTDAARFMFLSRKSDSPLDFDLELAKQRSLDNPVYYVQYAHARICAVLRRAAERGFVLPEKSDAALLAPLDTAEDMTLLRKAAAFEDMLFAAAQSLGVHHVSHYLTELAGLLHSYYARHQVLLADDAPRTLARLALLRSVGQVVRNGLDVLGVSAPESM.

The short motif at 124 to 134 (ANPTGPLHVGH) is the 'HIGH' region element.

Belongs to the class-I aminoacyl-tRNA synthetase family. Monomer.

It is found in the cytoplasm. It carries out the reaction tRNA(Arg) + L-arginine + ATP = L-arginyl-tRNA(Arg) + AMP + diphosphate. This chain is Arginine--tRNA ligase, found in Desulfovibrio desulfuricans (strain ATCC 27774 / DSM 6949 / MB).